We begin with the raw amino-acid sequence, 120 residues long: Large ribosomal subunit protein bL12 (120 aa).

Belongs to the bacterial ribosomal protein bL12 family. As to quaternary structure, homodimer. Part of the ribosomal stalk of the 50S ribosomal subunit. Forms a multimeric L10(L12)X complex, where L10 forms an elongated spine to which 2 to 4 L12 dimers bind in a sequential fashion. Binds GTP-bound translation factors.

In terms of biological role, forms part of the ribosomal stalk which helps the ribosome interact with GTP-bound translation factors. Is thus essential for accurate translation. The chain is Large ribosomal subunit protein bL12 from Aeromonas salmonicida (strain A449).